The following is a 440-amino-acid chain: Tyrosine--tRNA ligase (440 aa).

Y46 lines the L-tyrosine pocket. A 'HIGH' region motif is present at residues 51–60; that stretch reads PTAPSLHIGN. Positions 181 and 185 each coordinate L-tyrosine. The short motif at 241-245 is the 'KMSKS' region element; that stretch reads KFGKS. K244 contacts ATP. The 58-residue stretch at 373–430 folds into the S4 RNA-binding domain; sequence DRIAQAGVSAGLFKSISEARKTIKSGGVYVNNVRVEDEEQLLGDGDFLKGRFVVLRRG.

It belongs to the class-I aminoacyl-tRNA synthetase family. TyrS type 1 subfamily. As to quaternary structure, homodimer.

It is found in the cytoplasm. It catalyses the reaction tRNA(Tyr) + L-tyrosine + ATP = L-tyrosyl-tRNA(Tyr) + AMP + diphosphate + H(+). Its function is as follows. Catalyzes the attachment of tyrosine to tRNA(Tyr) in a two-step reaction: tyrosine is first activated by ATP to form Tyr-AMP and then transferred to the acceptor end of tRNA(Tyr). The protein is Tyrosine--tRNA ligase of Bifidobacterium animalis subsp. lactis (strain AD011).